Consider the following 173-residue polypeptide: NADH-ubiquinone oxidoreductase chain 6 (173 aa).

5 helical membrane-spanning segments follow: residues 1–21 (MTYL…AVAS), 24–44 (APYF…GVLV), 53–73 (LVLF…SAAL), 86–106 (SVVG…GVFW), and 139–159 (YGGG…FVVL).

This sequence belongs to the complex I subunit 6 family.

It localises to the mitochondrion membrane. It carries out the reaction a ubiquinone + NADH + 5 H(+)(in) = a ubiquinol + NAD(+) + 4 H(+)(out). Core subunit of the mitochondrial membrane respiratory chain NADH dehydrogenase (Complex I) that is believed to belong to the minimal assembly required for catalysis. Complex I functions in the transfer of electrons from NADH to the respiratory chain. The immediate electron acceptor for the enzyme is believed to be ubiquinone. This chain is NADH-ubiquinone oxidoreductase chain 6 (MT-ND6), found in Formosania lacustris (Oriental stream loach).